The sequence spans 117 residues: Minor capsid protein VP2 (117 aa).

Belongs to the lagovirus VP2 protein family. In terms of assembly, homooligomer. The portal-like structure consists in 12 copies of VP2. Interacts with capsid protein VP1.

The protein resides in the virion. Its subcellular location is the host cytoplasm. In terms of biological role, minor structural protein that forms a portal-like structure at a unique three-fold axis of symmetry, following binding to the host receptor. The channel formed by VP2 may allow the delivery of the viral genome through the host endosomal membrane. The sequence is that of Minor capsid protein VP2 from Oryctolagus cuniculus (Rabbit).